We begin with the raw amino-acid sequence, 278 residues long: Probable ribosomal RNA small subunit methyltransferase A (278 aa).

Residues His25, Met27, Gly52, Glu73, Asp98, and Asn114 each contribute to the S-adenosyl-L-methionine site.

This sequence belongs to the class I-like SAM-binding methyltransferase superfamily. rRNA adenine N(6)-methyltransferase family. RsmA subfamily.

It localises to the cytoplasm. In terms of biological role, specifically dimethylates two adjacent adenosines in the loop of a conserved hairpin near the 3'-end of 16S rRNA in the 30S particle. May play a critical role in biogenesis of 30S subunits. This Methanopyrus kandleri (strain AV19 / DSM 6324 / JCM 9639 / NBRC 100938) protein is Probable ribosomal RNA small subunit methyltransferase A.